Consider the following 209-residue polypeptide: MEFLLLLSLALFSDAMVMDEKVKSGVELETASAVCVYDAYYKDHTKYWCRGYFRDSCNIIAFTPNSTNRVALKDTGNQLIITISCLVKEDTGWYWCGIQRDLARDDMDFTQLIVTDNREDRANGFSSDPSGNRTRSCRASKAVQKAEGSRMSILIICILITSLGIIFIISHLSRGRRSQRNREVTGKSISRNPQASQGPSMVSITLARI.

A signal peptide spans 1-15; sequence MEFLLLLSLALFSDA. Residues 152–172 form a helical membrane-spanning segment; it reads SILIICILITSLGIIFIISHL. Residues 179–201 are disordered; the sequence is QRNREVTGKSISRNPQASQGPSM. Positions 187-201 are enriched in polar residues; it reads KSISRNPQASQGPSM.

Its subcellular location is the membrane. In Mus musculus (Mouse), this protein is Transmembrane domain-containing protein TMIGD3 (Tmigd3).